A 402-amino-acid chain; its full sequence is Caspase-1 (402 aa).

The CARD domain maps to 1–91 (MADKVLRAKR…YLAEILELQS (91 aa)). Residues 1–118 (MADKVLRAKR…PFSSETKEKL (118 aa)) constitute a propeptide that is removed on maturation. Residues His236 and Cys284 contribute to the active site. The propeptide occupies 297 to 314 (SVGNSEEGFLTDAIFEDD). Ser301 bears the Phosphoserine mark.

Belongs to the peptidase C14A family. As to quaternary structure, heterotetramer that consists of two anti-parallel arranged heterodimers, each one formed by a 20 kDa (Caspase-1 subunit p20) and a 10 kDa (Caspase-1 subunit p10) subunit. May be a component of the inflammasome, a protein complex which also includes PYCARD, CARD8 and NLRP2 and whose function would be the activation of pro-inflammatory caspases. Component of the AIM2 PANoptosome complex, a multiprotein complex that drives inflammatory cell death (PANoptosis). Both the p10 and p20 subunits interact with MEFV. Interacts with CARD17P/INCA and CARD18. Interacts with SERPINB1; this interaction regulates CASP1 activity. Heterotetramer that consists of two anti-parallel arranged heterodimers, each one formed by a 20 kDa (Caspase-1 subunit p20) and a 10 kDa (Caspase-1 subunit p10) subunit. The two subunits are derived from the precursor sequence by an autocatalytic mechanism. In terms of processing, ubiquitinated via 'Lys-11'-linked polyubiquitination. Deubiquitinated by USP8.

It localises to the cytoplasm. The protein resides in the cell membrane. It catalyses the reaction Strict requirement for an Asp residue at position P1 and has a preferred cleavage sequence of Tyr-Val-Ala-Asp-|-.. Its function is as follows. Thiol protease involved in a variety of inflammatory processes by proteolytically cleaving other proteins, such as the precursors of the inflammatory cytokines interleukin-1 beta (IL1B) and interleukin 18 (IL18) as well as the pyroptosis inducer Gasdermin-D (GSDMD), into active mature peptides. Plays a key role in cell immunity as an inflammatory response initiator: once activated through formation of an inflammasome complex, it initiates a pro-inflammatory response through the cleavage of the two inflammatory cytokines IL1B and IL18, releasing the mature cytokines which are involved in a variety of inflammatory processes. Cleaves a tetrapeptide after an Asp residue at position P1. Also initiates pyroptosis, a programmed lytic cell death pathway, through cleavage of GSDMD. In contrast to cleavage of interleukin IL1B, recognition and cleavage of GSDMD is not strictly dependent on the consensus cleavage site but depends on an exosite interface on CASP1 that recognizes and binds the Gasdermin-D, C-terminal (GSDMD-CT) part. Cleaves and activates CASP7 in response to bacterial infection, promoting plasma membrane repair. Upon inflammasome activation, during DNA virus infection but not RNA virus challenge, controls antiviral immunity through the cleavage of CGAS, rendering it inactive. In apoptotic cells, cleaves SPHK2 which is released from cells and remains enzymatically active extracellularly. The sequence is that of Caspase-1 (Casp1) from Rattus norvegicus (Rat).